The following is a 716-amino-acid chain: Polycystin-2 (716 aa).

2 stretches are compositionally biased toward basic and acidic residues: residues 1 to 10 (MNYGAADERW) and 30 to 41 (MVSEEYEHDKKK). The disordered stretch occupies residues 1–44 (MNYGAADERWANPPQPVAAAEHGPSFDHSMVSEEYEHDKKKNPA). Topologically, residues 1-72 (MNYGAADERW…SDGKIKLTAR (72 aa)) are cytoplasmic. Residues 73–93 (SFMEVGGYAVFLIVLVYVAFA) form a helical membrane-spanning segment. Topologically, residues 94-324 (QNSIQSYYYS…YQTSGGTRMM (231 aa)) are extracellular. 2 N-linked (GlcNAc...) asparagine glycosylation sites follow: asparagine 150 and asparagine 177. A disulfide bridge links cysteine 180 with cysteine 193. The chain crosses the membrane as a helical span at residues 325–345 (IFEGIFCGFILYFIFEELFAI). The Cytoplasmic portion of the chain corresponds to 346 to 355 (GRHRLHYLTQ). A helical membrane pass occupies residues 356-376 (FWNLVDVVLLGFSVATIILSV). Asparagine 377 carries an N-linked (GlcNAc...) asparagine glycan. The Extracellular portion of the chain corresponds to 377–409 (NRTKTGVNRVNSVIENGLTNAPFDDVTSSENSY). The chain crosses the membrane as a helical span at residues 410–430 (LNIKACVVFVAWVKVFKFISV). The Cytoplasmic portion of the chain corresponds to 431-447 (NKTMSQLSSTLTRSAKD). The helical transmembrane segment at 448 to 468 (IGGFAVMFAVFFFAFAQFGYL) threads the bilayer. Over 469 to 482 (CFGTQIADYSNLYN) the chain is Extracellular. The segment at residues 483-497 (SAFALLRLILGDFNF) is an intramembrane region (pore-forming). The Extracellular segment spans residues 498-510 (SALESCNRFFGPA). The helical transmembrane segment at 511–531 (FFIAYVFFVSFILLNMFLAII) threads the bilayer. Residues 532–716 (NDSYVEVKAE…ITSIADKKEE (185 aa)) are Cytoplasmic-facing. A Phosphoserine; by CK2 modification is found at serine 534. Residues 613–680 (EKVAEDIADE…IEKQRVQQQD (68 aa)) are a coiled coil. Residues 696 to 716 (RNRESAARRPTITSIADKKEE) are disordered.

This sequence belongs to the polycystin family. Post-translationally, phosphorylated. CK2 (kin-3 and kin-10) and calcineurin act antagonistically to regulate the phosphorylation state. As to expression, exclusively expressed in a subset of 3 categories of adult male sensory neurons: ray neurons, hook neurons and head cephalic (CEM) neurons. Expressed in the male tail.

It localises to the cell membrane. The protein resides in the cell projection. It is found in the cilium membrane. Its subcellular location is the cilium. The protein localises to the axon. It localises to the dendrite. The protein resides in the perikaryon. It is found in the endoplasmic reticulum membrane. Its function is as follows. Functions as a calcium permeable cation channel. Required for 2 aspects of male mating behavior: response to hermaphrodite contact and vulva location. Acts in the same pathway as lov-1 and atp-2 in response behavior. The chain is Polycystin-2 from Caenorhabditis elegans.